A 184-amino-acid polypeptide reads, in one-letter code: uncharacterized protein (184 aa).

Residues 32-52 form a disordered region; it reads PCPRSRTQGQSRRSETHTISR.

It localises to the mitochondrion. This is an uncharacterized protein from Arabidopsis thaliana (Mouse-ear cress).